A 181-amino-acid polypeptide reads, in one-letter code: FMN reductase (NADH) RutF (181 aa).

This sequence belongs to the non-flavoprotein flavin reductase family. RutF subfamily.

It carries out the reaction FMNH2 + NAD(+) = FMN + NADH + 2 H(+). Its function is as follows. Catalyzes the reduction of FMN to FMNH2 which is used to reduce pyrimidine by RutA via the Rut pathway. The protein is FMN reductase (NADH) RutF of Ancylobacter novellus (strain ATCC 8093 / DSM 506 / JCM 20403 / CCM 1077 / IAM 12100 / NBRC 12443 / NCIMB 10456) (Starkeya novella).